A 169-amino-acid chain; its full sequence is CRISPR system Cmr subunit Cmr5 (169 aa).

It belongs to the CRISPR system Cmr5 family. In terms of assembly, monomer in isolation. Part of the type III-B Cmr ribonucleoprotein (RNP) complex, an elongated RNP with Cmr2 and Cmr3 as the base, with Cmr4 and Cmr5 forming a helical core along the mature crRNA (39 or 45 nt in length), while the complex is capped by Cmr6 and Cmr1. The 5' end of the crRNA is bound to Cmr2 and Cmr3, while Cmr6 and a Cmr1 subunit (Cmr1-1 or Cmr1-2) cap the 3' end of the crRNA. The target RNA lies antiparallel to the crRNA, with its 5' end near Cmr1 and Cmr6 and its 3' end near Cmr2 and Cmr3; major target cleavage occurs nears the junction of Cmr1/Cmr6 and Cmr4/Cmr, with minor cleavage occurring at 6 nt intervals which coincide with the proposed spacing of Cmr4 subunits. Interacts with Cmr4. Interacts with Cmr2, Cmr4 and Cmr6.

It localises to the cytoplasm. Its function is as follows. CRISPR (clustered regularly interspaced short palindromic repeat), is an adaptive immune system that provides protection against mobile genetic elements (viruses, transposable elements and conjugative plasmids). CRISPR clusters contain sequences complementary to antecedent mobile elements and target invading nucleic acids. CRISPR clusters are transcribed and processed into CRISPR RNA (crRNA), formerly called psiRNA (prokaryotic silencing) in this organism. Part of the Cmr ribonucleoprotein complex which has divalent cation-dependent endoribonuclease activity specific for ssRNA complementary to the crRNA (target NRA), generating 5' hydroxy- and 3' phosphate or 2'-3' cyclic phosphate termini. Cmr4 is probably the subunit that cleaves target RNA. Cmr complex does not cleave ssDNA complementary to the crRNA. Cleavage of invading RNA is guided by the crRNA; substrate cleavage occurs a fixed distance (14 nt) from the 3' end of the crRNA. In vitro reconstitution shows Cmr1-2 and Cmr5 are not absolutely necessary for target cleavage. The sequence is that of CRISPR system Cmr subunit Cmr5 from Pyrococcus furiosus (strain ATCC 43587 / DSM 3638 / JCM 8422 / Vc1).